Reading from the N-terminus, the 111-residue chain is Kalata-B7 (111 aa).

The signal sequence occupies residues 1–28 (MAKFTNCLALCLLLAAVVGAFGVELSEA). Residues 29 to 75 (DKSAVVNEIAEKMALQEMLDGVDKLFLRKMKSSETTLTMFLKEMQLK) constitute a propeptide that is removed on maturation. The segment at residues 76 to 104 (GLPVCGETCTLGTCYTQGCTCSWPICKRN) is a cross-link (cyclopeptide (Gly-Asn)). Intrachain disulfides connect cysteine 80/cysteine 94, cysteine 84/cysteine 96, and cysteine 89/cysteine 101. Residues 105–111 (GLPDVAA) constitute a propeptide that is removed on maturation.

In terms of processing, kalata-B7 is a cyclic peptide.

Its function is as follows. Probably participates in a plant defense mechanism. Has hemolytic activity. The protein is Kalata-B7 (OAK3) of Oldenlandia affinis.